The primary structure comprises 165 residues: Neurotrophin-3 (165 aa).

The first 3 residues, 1-3 (IQS), serve as a signal peptide directing secretion. Residues 4–119 (TSMDQGSLSE…VLNRTSRRKR (116 aa)) constitute a propeptide that is removed on maturation. The segment at 32-61 (KVPKQAARTKDGTQTTAKKTEAEPEATANK) is disordered. N112 carries N-linked (GlcNAc...) asparagine glycosylation.

This sequence belongs to the NGF-beta family.

It localises to the secreted. Seems to promote the survival of visceral and proprioceptive sensory neurons. In Xenopeltis unicolor (Sunbeam snake), this protein is Neurotrophin-3 (NTF3).